We begin with the raw amino-acid sequence, 138 residues long: Bis(5'-nucleosyl)-tetraphosphatase [asymmetrical] (138 aa).

In terms of domain architecture, Nudix hydrolase spans 1–132; the sequence is MVVKAAGLVI…EMGSLLRKFS (132 aa). A Nudix box motif is present at residues 37 to 58; that stretch reads GHVDPGEDEWQAAIRETKEEAN.

It belongs to the Nudix hydrolase family. Monomer. It depends on Mg(2+) as a cofactor. Requires Co(2+) as cofactor. Mn(2+) is required as a cofactor. Zn(2+) serves as cofactor. The cofactor is Ca(2+).

It catalyses the reaction P(1),P(4)-bis(5'-adenosyl) tetraphosphate + H2O = AMP + ATP + 2 H(+). In terms of biological role, asymmetrically hydrolyzes Ap4A to yield AMP and ATP. The protein is Bis(5'-nucleosyl)-tetraphosphatase [asymmetrical] (ndx-4) of Caenorhabditis elegans.